Here is a 217-residue protein sequence, read N- to C-terminus: Oxygen-insensitive NAD(P)H nitroreductase (217 aa).

10–14 provides a ligand contact to FMN; that stretch reads RHSTK. K14, T41, T67, N71, K74, and R107 together coordinate NAD(+). N71 is an FMN binding site. FMN-binding positions include 165–166 and 205–207; these read EG and KSR.

The protein belongs to the nitroreductase family. Homodimer. FMN is required as a cofactor.

In terms of biological role, reduction of a variety of nitroaromatic compounds using NADH (and to lesser extent NADPH) as source of reducing equivalents; two electrons are transferred. This chain is Oxygen-insensitive NAD(P)H nitroreductase, found in Enterobacter cloacae.